A 459-amino-acid chain; its full sequence is Sorting nexin-8 (459 aa).

Residues 1–37 (MTGRAMDPLPSPAVAAAAEAEADEEADPPATGPRTSQ) form a disordered region. Residues 68 to 176 (AKDTVQVELI…KLFLSFSGSD (109 aa)) enclose the PX domain. Arg-104, Lys-130, and Arg-143 together coordinate a 1,2-diacyl-sn-glycero-3-phospho-(1D-myo-inositol-3-phosphate). The residue at position 446 (Thr-446) is a Phosphothreonine. Residue Ser-450 is modified to Phosphoserine.

Belongs to the sorting nexin family.

The protein resides in the early endosome membrane. Its function is as follows. May be involved in several stages of intracellular trafficking. May play a role in intracellular protein transport from early endosomes to the trans-Golgi network. The sequence is that of Sorting nexin-8 (Snx8) from Mus musculus (Mouse).